Consider the following 133-residue polypeptide: Single-stranded DNA-binding protein 2 (133 aa).

One can recognise an SSB domain in the interval 1–103; the sequence is MNKTILIGRL…VVAEEVKFLE (103 aa).

In terms of assembly, homotetramer.

In Clostridium acetobutylicum (strain ATCC 824 / DSM 792 / JCM 1419 / IAM 19013 / LMG 5710 / NBRC 13948 / NRRL B-527 / VKM B-1787 / 2291 / W), this protein is Single-stranded DNA-binding protein 2 (ssb2).